Reading from the N-terminus, the 249-residue chain is Putative ABC transporter ATP-binding protein GSU1281 (249 aa).

The ABC transporter domain maps to 6–236; the sequence is VEVRDLCHCY…DELLATCRLE (231 aa). 39 to 46 contacts ATP; it reads GANGAGKS.

Belongs to the ABC transporter superfamily.

Its subcellular location is the cell inner membrane. In terms of biological role, probably part of an ABC transporter complex. Responsible for energy coupling to the transport system. In Geobacter sulfurreducens (strain ATCC 51573 / DSM 12127 / PCA), this protein is Putative ABC transporter ATP-binding protein GSU1281.